The sequence spans 368 residues: Branched-chain-amino-acid aminotransferase (368 aa).

Residue Arg101 participates in pyridoxal 5'-phosphate binding. Residue Lys204 is modified to N6-(pyridoxal phosphate)lysine. Pyridoxal 5'-phosphate-binding positions include Tyr209, 271 to 272, and Thr314; that span reads IT.

Belongs to the class-IV pyridoxal-phosphate-dependent aminotransferase family. Homodimer. Pyridoxal 5'-phosphate is required as a cofactor.

The enzyme catalyses L-leucine + 2-oxoglutarate = 4-methyl-2-oxopentanoate + L-glutamate. It catalyses the reaction L-isoleucine + 2-oxoglutarate = (S)-3-methyl-2-oxopentanoate + L-glutamate. The catalysed reaction is L-valine + 2-oxoglutarate = 3-methyl-2-oxobutanoate + L-glutamate. The protein operates within amino-acid biosynthesis; L-isoleucine biosynthesis; L-isoleucine from 2-oxobutanoate: step 4/4. It functions in the pathway amino-acid biosynthesis; L-leucine biosynthesis; L-leucine from 3-methyl-2-oxobutanoate: step 4/4. Its pathway is amino-acid biosynthesis; L-valine biosynthesis; L-valine from pyruvate: step 4/4. Functionally, catalyzes the reversible transfers of an amino group from glutamate to the alpha-ketoacid of the respective amino acid in the final step in the biosynthesis of branchedchain amino acids. This Mycobacterium tuberculosis (strain CDC 1551 / Oshkosh) protein is Branched-chain-amino-acid aminotransferase (ilvE).